Here is a 243-residue protein sequence, read N- to C-terminus: Undecaprenyl-phosphate mannosyltransferase (243 aa).

It belongs to the glycosyltransferase 2 family.

It carries out the reaction di-trans,octa-cis-undecaprenyl phosphate + GDP-alpha-D-mannose = D-mannosyl di-trans,octa-cis-undecaprenyl phosphate + GDP. Catalyzes the transfer of mannose from GDP-mannose to D-mannosyl-1-phosphoundecaprenol. The sequence is that of Undecaprenyl-phosphate mannosyltransferase from Micrococcus luteus (strain ATCC 4698 / DSM 20030 / JCM 1464 / CCM 169 / CCUG 5858 / IAM 1056 / NBRC 3333 / NCIMB 9278 / NCTC 2665 / VKM Ac-2230) (Micrococcus lysodeikticus).